Here is a 653-residue protein sequence, read N- to C-terminus: Cytidine monophosphate-N-acetylneuraminic acid hydroxylase (653 aa).

One can recognise a Rieske domain in the interval 11–120 (LSPEETSELK…PEYNEDGSLD (110 aa)). Residues C62, H64, C83, and H86 each coordinate [2Fe-2S] cluster. A disordered region spans residues 596–622 (WNPSQATPAVEAKDPSSDSKDSATKPG). Basic and acidic residues predominate over residues 606-618 (EAKDPSSDSKDSA). Residues 630–647 (LLRPLGIVVALVGVGVAI) form a helical membrane-spanning segment.

This sequence belongs to the CMP-Neu5Ac hydroxylase family. [2Fe-2S] cluster is required as a cofactor.

It localises to the membrane. The catalysed reaction is CMP-N-acetyl-beta-neuraminate + 2 Fe(II)-[cytochrome b5] + O2 + 2 H(+) = CMP-N-glycoloyl-beta-neuraminate + 2 Fe(III)-[cytochrome b5] + H2O. Its pathway is amino-sugar metabolism; N-acetylneuraminate metabolism. Its function is as follows. Sialic acids are components of carbohydrate chains of glycoconjugates and are involved in cell-cell recognition and cell-pathogen interactions. Catalyzes the conversion of CMP-N-acetylneuraminic acid (CMP-Neu5Ac) into its hydroxylated derivative CMP-N-glycolylneuraminic acid (CMP-Neu5Gc), a sialic acid abundantly expressed at the surface of many cells. The chain is Cytidine monophosphate-N-acetylneuraminic acid hydroxylase (cnh) from Asterias rubens (Common European starfish).